The following is a 259-amino-acid chain: MNIRPLRQSVRPSPIFLLVIAVTAAGGALAWIAADTIRPLSYVGVFILVIAGWLMSLCLHEFGHAFTAWRFGDHGVETRGYLTLNPLKYTHPMLSLGLPVLIIALGGIGFPGGAVYLQTHWMTARQKSIVSLAGPAANLVLAVLLLGLTRAFWDPAHAVFWSGIAFLGFLQVTALVLNLLPIPGLDGYGALEPHLNPETQRALAPAKQWGFLIVVVLLITPALNRWFFELVYWFFDFSGVSSYLVSAGGQLTRFWSAWF.

The next 2 helical transmembrane spans lie at Pro-14–Ala-34 and Pro-39–Leu-59. His-60 contacts Zn(2+). Residue Glu-61 is part of the active site. His-64 contacts Zn(2+). Helical transmembrane passes span Leu-96–Tyr-116, Ile-129–Thr-149, Val-159–Leu-179, and Leu-203–Leu-223.

Belongs to the peptidase M50B family. The cofactor is Zn(2+).

It localises to the cell membrane. The polypeptide is Putative zinc metalloprotease Rip2 (rip2) (Mycolicibacterium smegmatis (strain ATCC 700084 / mc(2)155) (Mycobacterium smegmatis)).